We begin with the raw amino-acid sequence, 96 residues long: uncharacterized protein (96 aa).

This is an uncharacterized protein from Saccharomyces cerevisiae (strain ATCC 204508 / S288c) (Baker's yeast).